Consider the following 64-residue polypeptide: Cytotoxin homolog S4C8 (64 aa).

Cystine bridges form between C3-C22, C15-C40, C44-C56, and C57-C62.

The protein belongs to the three-finger toxin family. Short-chain subfamily. Orphan group XIII sub-subfamily. Expressed by the venom gland.

Its subcellular location is the secreted. This is Cytotoxin homolog S4C8 from Aspidelaps scutatus (Shield-nose snake).